Consider the following 626-residue polypeptide: Colicin-Ia (626 aa).

The interval 23-225 (EIMAVDIYVN…TRLSELEKNG (203 aa)) is translocation (T). Over residues 276 to 286 (QQLTQQKNTPD) the composition is skewed to polar residues. A disordered region spans residues 276–308 (QQLTQQKNTPDGKTIVSPEKFPGRSSTNHSIVV). The segment at 282 to 385 (KNTPDGKTIV…LRQRLLDARN (104 aa)) is receptor-binding (R). The segment at 450 to 626 (KDAINFTTEF…VEKANKFWGI (177 aa)) is channel (C). The next 2 membrane-spanning stretches (helical) occupy residues 580–594 (ATAL…LTGS) and 597–612 (GIIG…GALI).

The protein belongs to the channel forming colicin family.

It localises to the cell membrane. This colicin is a channel-forming colicin. This class of transmembrane toxins depolarize the cytoplasmic membrane, leading to dissipation of cellular energy. In terms of biological role, colicins are polypeptide toxins produced by and active against E.coli and closely related bacteria. This Escherichia coli protein is Colicin-Ia (cia).